A 526-amino-acid chain; its full sequence is Major facilitator superfamily domain-containing protein 4A (526 aa).

12 helical membrane passes run 21-41 (LTYW…GPTI), 55-75 (ITLV…IGGF), 84-104 (LSSL…IPLC), 107-127 (LLML…IDTI), 142-162 (VFLQ…PLIA), 215-235 (YAFW…FVLV), 297-317 (LSFF…DGIV), 341-361 (GYLT…AIPL), 377-397 (GVIV…FLFI), 401-421 (CLGL…EDIL), 430-450 (VLVT…GSVM), and 458-478 (FLLC…FLYF).

Belongs to the major facilitator superfamily.

Its subcellular location is the membrane. The chain is Major facilitator superfamily domain-containing protein 4A (mfsd4a) from Danio rerio (Zebrafish).